The primary structure comprises 314 residues: tRNA pseudouridine synthase B (314 aa).

Residue histidine 43 participates in substrate binding. Aspartate 48 acts as the Nucleophile in catalysis. Substrate is bound by residues tyrosine 76, tyrosine 179, and leucine 200.

This sequence belongs to the pseudouridine synthase TruB family. Type 1 subfamily.

The catalysed reaction is uridine(55) in tRNA = pseudouridine(55) in tRNA. In terms of biological role, responsible for synthesis of pseudouridine from uracil-55 in the psi GC loop of transfer RNAs. In Enterobacter sp. (strain 638), this protein is tRNA pseudouridine synthase B.